The sequence spans 401 residues: MASILSRMGNSRGQNSPLPPWAHSMLRSLGRSLGPLMASMAERNMKLFSGRAEPAQGEETFENWLSQVTAVLPDWHMPEEEKVRRLMRTLRGPAREVMRLLQAANPCLDVEDFLRAMKLVFGESESSVTAHSKFVNTVQEPGEKPSLYVIRLEVQLQNAIQAGVFAEREANQARLHQLLVGAEMSTDLRFRLKSLLRVYANEPERLPNFLELIRMIREEEEWEEAFIHPKRPRRSQSVERALSPTFQSSPPVMISSIDCNVIEIDDSPDDSDEDVILVEPDDPPLPSSSAGPSFLGRAVSEDQVLVIESPNIFEIQAPSTSSGAGRKNNNNFGELRRARKRKHTVHCSHCGEEGHSKETCDNESDRGQVFENLIITLQELTHTEERAREIFGEAIGLSELH.

Disordered stretches follow at residues 1-20 and 270-292; these read MASILSRMGNSRGQNSPLPP and DSDEDVILVEPDDPPLPSSSAGP. Residues 270 to 282 show a composition bias toward acidic residues; the sequence is DSDEDVILVEPDD. The segment at 345-362 adopts a CCHC-type zinc-finger fold; that stretch reads VHCSHCGEEGHSKETCDN.

This sequence belongs to the ZCCHC12 family. Interacts with SMAD1 and CREB-binding protein (CBP). Forms a protein-DNA complex through its association with SMAD1.

In terms of biological role, transcriptional coactivator in the bone morphogenetic protein (BMP)-signaling pathway. It positively modulates BMP signaling by interacting with SMAD1 and associating with CBP in the transcription complex. It contributes to the BMP-induced enhancement of cholinergic-neuron-specific gene expression. The chain is Zinc finger CCHC domain-containing protein 12 (Zcchc12) from Rattus norvegicus (Rat).